A 462-amino-acid chain; its full sequence is Chromosomal replication initiator protein DnaA (462 aa).

Residues 1-84 (MAVSLWQQCI…RFDIGSRPSA (84 aa)) form a domain I, interacts with DnaA modulators region. Residues 84–125 (APRPVQATAAVERPKFEQNTKPAKTSFNVNSPEPAMAANHRS) are domain II. The tract at residues 126-342 (NINRTYQFEN…GALNRVIANA (217 aa)) is domain III, AAA+ region. Gly170, Gly172, Lys173, and Thr174 together coordinate ATP. The domain IV, binds dsDNA stretch occupies residues 343-462 (NFTGRPITID…YANLIRTLSS (120 aa)).

The protein belongs to the DnaA family. In terms of assembly, oligomerizes as a right-handed, spiral filament on DNA at oriC.

The protein localises to the cytoplasm. Plays an essential role in the initiation and regulation of chromosomal replication. ATP-DnaA binds to the origin of replication (oriC) to initiate formation of the DNA replication initiation complex once per cell cycle. Binds the DnaA box (a 9 base pair repeat at the origin) and separates the double-stranded (ds)DNA. Forms a right-handed helical filament on oriC DNA; dsDNA binds to the exterior of the filament while single-stranded (ss)DNA is stabiized in the filament's interior. The ATP-DnaA-oriC complex binds and stabilizes one strand of the AT-rich DNA unwinding element (DUE), permitting loading of DNA polymerase. After initiation quickly degrades to an ADP-DnaA complex that is not apt for DNA replication. Binds acidic phospholipids. The protein is Chromosomal replication initiator protein DnaA of Shewanella sediminis (strain HAW-EB3).